The following is a 201-amino-acid chain: Peptidyl-prolyl cis-trans isomerase FKBP11 (201 aa).

An N-terminal signal peptide occupies residues Met1 to Ala27. The PPIase FKBP-type domain maps to Gly57–Ile144. The helical transmembrane segment at Ile156–Leu176 threads the bilayer.

The protein belongs to the FKBP-type PPIase family. As to quaternary structure, interacts with IFITM5.

The protein localises to the membrane. The enzyme catalyses [protein]-peptidylproline (omega=180) = [protein]-peptidylproline (omega=0). In terms of biological role, PPIases accelerate the folding of proteins during protein synthesis. The protein is Peptidyl-prolyl cis-trans isomerase FKBP11 (FKBP11) of Homo sapiens (Human).